The chain runs to 176 residues: Protein FimF (176 aa).

An N-terminal signal peptide occupies residues 1–20 (MRNKPFYLLCAFLWLAVSHA). A disulfide bond links cysteine 38 and cysteine 78.

This sequence belongs to the fimbrial protein family.

It localises to the fimbrium. In terms of biological role, involved in regulation of length and mediation of adhesion of type 1 fimbriae (but not necessary for the production of fimbriae). Involved in the integration of FimH in the fimbriae. The protein is Protein FimF (fimF) of Escherichia coli (strain K12).